A 779-amino-acid chain; its full sequence is Endonuclease MutS2 (779 aa).

328-335 lines the ATP pocket; it reads GPNTGGKT. A Smr domain is found at 704 to 779; sequence LDLRGKRYEE…GSGATIVTLG (76 aa).

This sequence belongs to the DNA mismatch repair MutS family. MutS2 subfamily. In terms of assembly, homodimer. Binds to stalled ribosomes, contacting rRNA.

Endonuclease that is involved in the suppression of homologous recombination and thus may have a key role in the control of bacterial genetic diversity. Functionally, acts as a ribosome collision sensor, splitting the ribosome into its 2 subunits. Detects stalled/collided 70S ribosomes which it binds and splits by an ATP-hydrolysis driven conformational change. Acts upstream of the ribosome quality control system (RQC), a ribosome-associated complex that mediates the extraction of incompletely synthesized nascent chains from stalled ribosomes and their subsequent degradation. Probably generates substrates for RQC. This chain is Endonuclease MutS2, found in Streptococcus pyogenes serotype M18 (strain MGAS8232).